We begin with the raw amino-acid sequence, 731 residues long: 1,4-alpha-glucan branching enzyme GlgB (731 aa).

Aspartate 411 (nucleophile) is an active-site residue. The active-site Proton donor is the glutamate 464.

Belongs to the glycosyl hydrolase 13 family. GlgB subfamily. In terms of assembly, monomer.

The catalysed reaction is Transfers a segment of a (1-&gt;4)-alpha-D-glucan chain to a primary hydroxy group in a similar glucan chain.. It functions in the pathway glycan biosynthesis; glycogen biosynthesis. Catalyzes the formation of the alpha-1,6-glucosidic linkages in glycogen by scission of a 1,4-alpha-linked oligosaccharide from growing alpha-1,4-glucan chains and the subsequent attachment of the oligosaccharide to the alpha-1,6 position. This is 1,4-alpha-glucan branching enzyme GlgB from Mycolicibacterium paratuberculosis (strain ATCC BAA-968 / K-10) (Mycobacterium paratuberculosis).